The chain runs to 205 residues: Adenylyl-sulfate kinase (205 aa).

31 to 38 (GLSGSGKS) contacts ATP. S105 serves as the catalytic Phosphoserine intermediate.

It belongs to the APS kinase family.

The enzyme catalyses adenosine 5'-phosphosulfate + ATP = 3'-phosphoadenylyl sulfate + ADP + H(+). Its pathway is sulfur metabolism; hydrogen sulfide biosynthesis; sulfite from sulfate: step 2/3. Catalyzes the synthesis of activated sulfate. In Shewanella pealeana (strain ATCC 700345 / ANG-SQ1), this protein is Adenylyl-sulfate kinase.